Here is a 174-residue protein sequence, read N- to C-terminus: Methylated-DNA--protein-cysteine methyltransferase (174 aa).

The active-site Nucleophile; methyl group acceptor is the C144.

The protein belongs to the MGMT family.

Its subcellular location is the cytoplasm. It carries out the reaction a 6-O-methyl-2'-deoxyguanosine in DNA + L-cysteinyl-[protein] = S-methyl-L-cysteinyl-[protein] + a 2'-deoxyguanosine in DNA. The catalysed reaction is a 4-O-methyl-thymidine in DNA + L-cysteinyl-[protein] = a thymidine in DNA + S-methyl-L-cysteinyl-[protein]. Involved in the cellular defense against the biological effects of O6-methylguanine (O6-MeG) and O4-methylthymine (O4-MeT) in DNA. Repairs the methylated nucleobase in DNA by stoichiometrically transferring the methyl group to a cysteine residue in the enzyme. This is a suicide reaction: the enzyme is irreversibly inactivated. This is Methylated-DNA--protein-cysteine methyltransferase from Pyrococcus furiosus (strain ATCC 43587 / DSM 3638 / JCM 8422 / Vc1).